Reading from the N-terminus, the 624-residue chain is Actin-related protein 8 (624 aa).

Met-1 bears the N-acetylmethionine mark. Over residues 1 to 25 (MTQAEKGEAENGKEKGGEKEKEQRG) the composition is skewed to basic and acidic residues. The tract at residues 1–29 (MTQAEKGEAENGKEKGGEKEKEQRGVKRP) is disordered. ATP is bound by residues Ser-55 and Thr-56. Ser-132 is modified (phosphoserine). 283 to 286 (DVGD) provides a ligand contact to ATP. Ser-412 carries the post-translational modification Phosphoserine. The interval 430-462 (SKQEQSAKATADRKSASKPIGFEGDLRGQSSDL) is disordered.

Belongs to the actin family. ARP8 subfamily. As to quaternary structure, component of the chromatin remodeling INO80 complex; specifically part of a complex module associated with the DBINO domain of INO80. Exists as monomers and dimers, but the dimer is most probably the biologically relevant form required for stable interactions with histones that exploits the twofold symmetry of the nucleosome core.

It is found in the nucleus. The protein resides in the chromosome. Plays an important role in the functional organization of mitotic chromosomes. Exhibits low basal ATPase activity, and unable to polymerize. Its function is as follows. Proposed core component of the chromatin remodeling INO80 complex which is involved in transcriptional regulation, DNA replication and probably DNA repair. Required for the recruitment of INO80 (and probably the INO80 complex) to sites of DNA damage Strongly prefer nucleosomes and H3-H4 tetramers over H2A-H2B dimers, suggesting it may act as a nucleosome recognition module within the complex. In Bos taurus (Bovine), this protein is Actin-related protein 8 (ACTR8).